The sequence spans 39 residues: Cytochrome b559 subunit beta (39 aa).

Residues 14–30 (WLTVHGLAVPTVSFLGS) form a helical membrane-spanning segment. Residue H18 coordinates heme.

It belongs to the PsbE/PsbF family. As to quaternary structure, heterodimer of an alpha subunit and a beta subunit. PSII is composed of 1 copy each of membrane proteins PsbA, PsbB, PsbC, PsbD, PsbE, PsbF, PsbH, PsbI, PsbJ, PsbK, PsbL, PsbM, PsbT, PsbX, PsbY, PsbZ, Psb30/Ycf12, at least 3 peripheral proteins of the oxygen-evolving complex and a large number of cofactors. It forms dimeric complexes. It depends on heme b as a cofactor.

The protein localises to the plastid. The protein resides in the chloroplast thylakoid membrane. Its function is as follows. This b-type cytochrome is tightly associated with the reaction center of photosystem II (PSII). PSII is a light-driven water:plastoquinone oxidoreductase that uses light energy to abstract electrons from H(2)O, generating O(2) and a proton gradient subsequently used for ATP formation. It consists of a core antenna complex that captures photons, and an electron transfer chain that converts photonic excitation into a charge separation. In Cucumis sativus (Cucumber), this protein is Cytochrome b559 subunit beta.